Reading from the N-terminus, the 49-residue chain is U1-theraphotoxin-Lp1b (49 aa).

Intrachain disulfides connect cysteine 4–cysteine 17, cysteine 8–cysteine 41, cysteine 22–cysteine 24, and cysteine 35–cysteine 46.

As to expression, expressed by the venom gland.

The protein resides in the secreted. Toxin that causes irreversible contractile paralysis into adult Aedes aegypti resulting in 100% mortality after 24 hours. The protein is U1-theraphotoxin-Lp1b of Lasiodora parahybana (Brazilian salmon pink birdeater).